The sequence spans 1194 residues: Pre-mRNA-processing ATP-dependent RNA helicase prp-5 (1194 aa).

3 disordered regions span residues 1–201 (MARL…KEAK), 224–248 (AVVG…ASPA), and 452–484 (ASGE…DDYG). 2 stretches are compositionally biased toward basic and acidic residues: residues 21–37 (RKDD…GPVD) and 44–154 (SPID…RDQP). Over residues 156-176 (PGNTTAKENEPAKSTPTQPQT) the composition is skewed to polar residues. Positions 177–186 (EAEKKAERLR) are enriched in basic and acidic residues. Residues 232 to 248 (SPAPASPAAAESPASPA) are compositionally biased toward low complexity. The span at 455-469 (EESHSKADTLTEKKN) shows a compositional bias: basic and acidic residues. The short motif at 561–589 (QKWSQCGLTRPILDTIESLGFEKPTPIQM) is the Q motif element. Positions 592–770 (LPVIMSGRDV…KKVLRDPVEI (179 aa)) constitute a Helicase ATP-binding domain. 605 to 612 (AKTGSGKT) is an ATP binding site. Residues 718–721 (DEAD) carry the DEAD box motif. A Helicase C-terminal domain is found at 797–945 (RLLELLGELY…PVPDRLNEMR (149 aa)). 2 disordered regions span residues 952-1011 (VKAG…DKTK) and 1025-1056 (DASK…SGGA). Basic and acidic residues-rich tracts occupy residues 967 to 980 (GLEK…AARM), 997 to 1011 (EDAP…DKTK), and 1025 to 1036 (DASKAETEDKHA).

The protein belongs to the DEAD box helicase family. DDX46/PRP5 subfamily.

The protein localises to the nucleus. It catalyses the reaction ATP + H2O = ADP + phosphate + H(+). ATP-dependent RNA helicase involved spliceosome assembly and in nuclear splicing. Catalyzes an ATP-dependent conformational change of U2 snRNP. Bridges U1 and U2 snRNPs and enables stable U2 snRNP association with intron RNA. The chain is Pre-mRNA-processing ATP-dependent RNA helicase prp-5 (prp-5) from Neurospora crassa (strain ATCC 24698 / 74-OR23-1A / CBS 708.71 / DSM 1257 / FGSC 987).